The chain runs to 90 residues: UPF0297 protein BH1268 (90 aa).

The protein belongs to the UPF0297 family.

The protein is UPF0297 protein BH1268 of Halalkalibacterium halodurans (strain ATCC BAA-125 / DSM 18197 / FERM 7344 / JCM 9153 / C-125) (Bacillus halodurans).